The primary structure comprises 393 residues: Formate-dependent phosphoribosylglycinamide formyltransferase (393 aa).

Residues 22–23 (EL) and E82 each bind N(1)-(5-phospho-beta-D-ribosyl)glycinamide. ATP-binding positions include R114, K155, 160–165 (SSGKGQ), 195–198 (EGFV), and E203. The 190-residue stretch at 119–308 (RLAAEELGLP…EFALHVRAIL (190 aa)) folds into the ATP-grasp domain. Positions 267 and 279 each coordinate Mg(2+). Residues D286, K356, and 363–364 (RR) contribute to the N(1)-(5-phospho-beta-D-ribosyl)glycinamide site.

It belongs to the PurK/PurT family. Homodimer.

It carries out the reaction N(1)-(5-phospho-beta-D-ribosyl)glycinamide + formate + ATP = N(2)-formyl-N(1)-(5-phospho-beta-D-ribosyl)glycinamide + ADP + phosphate + H(+). Its pathway is purine metabolism; IMP biosynthesis via de novo pathway; N(2)-formyl-N(1)-(5-phospho-D-ribosyl)glycinamide from N(1)-(5-phospho-D-ribosyl)glycinamide (formate route): step 1/1. Its function is as follows. Involved in the de novo purine biosynthesis. Catalyzes the transfer of formate to 5-phospho-ribosyl-glycinamide (GAR), producing 5-phospho-ribosyl-N-formylglycinamide (FGAR). Formate is provided by PurU via hydrolysis of 10-formyl-tetrahydrofolate. This Nitratidesulfovibrio vulgaris (strain ATCC 29579 / DSM 644 / CCUG 34227 / NCIMB 8303 / VKM B-1760 / Hildenborough) (Desulfovibrio vulgaris) protein is Formate-dependent phosphoribosylglycinamide formyltransferase.